The chain runs to 190 residues: UPF0200 protein MTH_434 (190 aa).

10 to 17 is a binding site for ATP; sequence GMPGAGKG.

Belongs to the UPF0200 family.

The sequence is that of UPF0200 protein MTH_434 from Methanothermobacter thermautotrophicus (strain ATCC 29096 / DSM 1053 / JCM 10044 / NBRC 100330 / Delta H) (Methanobacterium thermoautotrophicum).